The primary structure comprises 122 residues: Serum amyloid A-1 protein (122 aa).

The N-terminal stretch at 1-18 is a signal peptide; sequence MKLLTGLVFCSLVLGVSS. Positions 19–45 are important for amyloid formation; forms amyloid fibrils in vitro; the sequence is RSFFSFLGEAFDGARDMWRAYSDMREA. Residues 95–122 constitute a propeptide, often cleaved during amyloidogenesis; sequence LADQAANEWGRSGKDPNHFRPAGLPEKY. A disordered region spans residues 98–122; it reads QAANEWGRSGKDPNHFRPAGLPEKY. Position 101 is an N4,N4-dimethylasparagine (N101).

It belongs to the SAA family. Homohexamer; dimer of trimers. Can form amyloid fibrils after partial proteolysis; the native, undenatured protein does not form amyloid fibrils (in vitro). Apolipoprotein of the HDL complex. Binds to heparin. In terms of processing, this protein is the precursor of amyloid protein A, which is formed by the removal of approximately 24 residues from the C-terminal end. Expressed by the liver; secreted in plasma (at protein level).

The protein localises to the secreted. Major acute phase protein. This Homo sapiens (Human) protein is Serum amyloid A-1 protein (SAA1).